A 505-amino-acid chain; its full sequence is Lysine--tRNA ligase (505 aa).

Residues Glu-415 and Glu-422 each coordinate Mg(2+).

The protein belongs to the class-II aminoacyl-tRNA synthetase family. In terms of assembly, homodimer. Requires Mg(2+) as cofactor.

It is found in the cytoplasm. It carries out the reaction tRNA(Lys) + L-lysine + ATP = L-lysyl-tRNA(Lys) + AMP + diphosphate. In Edwardsiella ictaluri (strain 93-146), this protein is Lysine--tRNA ligase.